Here is a 229-residue protein sequence, read N- to C-terminus: Cytochrome c oxidase subunit 2 (229 aa).

The Mitochondrial intermembrane segment spans residues 1–26 (MSTWANLGLQDSASPLMEQLIFFHDH). A helical transmembrane segment spans residues 27-48 (ALLILVMITVLVGYLMFMLFFN). The Mitochondrial matrix portion of the chain corresponds to 49–62 (SYVNRFLLHGQLIE). Residues 63–82 (MIWTILPAIILLFIAMPSLR) form a helical membrane-spanning segment. Residues 83–229 (LLYLLDEINE…IKWISSTVNS (147 aa)) lie on the Mitochondrial intermembrane side of the membrane. H161, C196, E198, C200, H204, and M207 together coordinate Cu cation. E198 contributes to the Mg(2+) binding site.

This sequence belongs to the cytochrome c oxidase subunit 2 family. In terms of assembly, component of the cytochrome c oxidase (complex IV, CIV), a multisubunit enzyme composed of a catalytic core of 3 subunits and several supernumerary subunits. The complex exists as a monomer or a dimer and forms supercomplexes (SCs) in the inner mitochondrial membrane with ubiquinol-cytochrome c oxidoreductase (cytochrome b-c1 complex, complex III, CIII). The cofactor is Cu cation.

It localises to the mitochondrion inner membrane. It catalyses the reaction 4 Fe(II)-[cytochrome c] + O2 + 8 H(+)(in) = 4 Fe(III)-[cytochrome c] + 2 H2O + 4 H(+)(out). Functionally, component of the cytochrome c oxidase, the last enzyme in the mitochondrial electron transport chain which drives oxidative phosphorylation. The respiratory chain contains 3 multisubunit complexes succinate dehydrogenase (complex II, CII), ubiquinol-cytochrome c oxidoreductase (cytochrome b-c1 complex, complex III, CIII) and cytochrome c oxidase (complex IV, CIV), that cooperate to transfer electrons derived from NADH and succinate to molecular oxygen, creating an electrochemical gradient over the inner membrane that drives transmembrane transport and the ATP synthase. Cytochrome c oxidase is the component of the respiratory chain that catalyzes the reduction of oxygen to water. Electrons originating from reduced cytochrome c in the intermembrane space (IMS) are transferred via the dinuclear copper A center (CU(A)) of subunit 2 and heme A of subunit 1 to the active site in subunit 1, a binuclear center (BNC) formed by heme A3 and copper B (CU(B)). The BNC reduces molecular oxygen to 2 water molecules using 4 electrons from cytochrome c in the IMS and 4 protons from the mitochondrial matrix. The polypeptide is Cytochrome c oxidase subunit 2 (mt:CoII) (Drosophila lowei (Fruit fly)).